Reading from the N-terminus, the 343-residue chain is Dihydroorotase (343 aa).

Zn(2+)-binding residues include His-14 and His-16. Substrate is bound by residues His-16 to Arg-18 and Asn-42. The Zn(2+) site is built by Lys-99, His-136, and His-174. Position 99 is an N6-carboxylysine (Lys-99). Residue His-136 coordinates substrate. A substrate-binding site is contributed by Leu-219. Residue Asp-247 participates in Zn(2+) binding. Asp-247 is an active-site residue. Residues His-251 and Ala-263 each coordinate substrate.

The protein belongs to the metallo-dependent hydrolases superfamily. DHOase family. Class II DHOase subfamily. Homodimer. Requires Zn(2+) as cofactor.

The enzyme catalyses (S)-dihydroorotate + H2O = N-carbamoyl-L-aspartate + H(+). Its pathway is pyrimidine metabolism; UMP biosynthesis via de novo pathway; (S)-dihydroorotate from bicarbonate: step 3/3. Catalyzes the reversible cyclization of carbamoyl aspartate to dihydroorotate. This is Dihydroorotase from Variovorax paradoxus (strain S110).